Reading from the N-terminus, the 523-residue chain is Sodium-dependent lysophosphatidylcholine symporter 1-B (523 aa).

Residues 1–34 (MAKGEGAEQYTNTSLLQKPSPDEVKLAKHETKSR) are Cytoplasmic-facing. The chain crosses the membrane as a helical span at residues 35-64 (LSVCSKLCYAIGGAPYQITGCAIGFFLQIY). The Extracellular segment spans residues 65 to 75 (LLDVALLDPFY). Residues 76 to 96 (ASIILFVGRAWDAVTDPTVGF) form a helical membrane-spanning segment. Over 97-108 (LVSRTPWTRFGR) the chain is Cytoplasmic. A helical membrane pass occupies residues 109–128 (MMPWIVLSTPFAVLCYFLIW). The Extracellular portion of the chain corresponds to 129–138 (YVPSVDQGKV). Residues 139–163 (VWYLIFYCCFQTLQTCFHVPYSALT) traverse the membrane as a helical segment. The Cytoplasmic portion of the chain corresponds to 164–170 (MFISTEQ). The helical transmembrane segment at 171–202 (KERDSATAYRMTVEVLGTLIGTAIQGQIVGMA) threads the bilayer. Topologically, residues 203-226 (NAPCISTEIDLNSTGLEVAPDVNI) are extracellular. Cysteines 206 and 457 form a disulfide. N-linked (GlcNAc...) asparagine glycans are attached at residues Asn-214 and Asn-225. The helical transmembrane segment at 227 to 260 (TDPHVSLQDLRNAYMIASGVICAIYVVCAVVLFL) threads the bilayer. Residues 261-290 (GVKEQKDTCRVRTEPMSFFQGICMVMGHGP) lie on the Cytoplasmic side of the membrane. A helical membrane pass occupies residues 291 to 317 (YAKLVMGFLFTSLAFMLLEGNFALFCI). At 318 to 328 (YNLGFRNDFQN) the chain is on the extracellular side. The helical transmembrane segment at 329-347 (VLLVIMLSATLAIPFWQWF) threads the bilayer. Residues 348 to 351 (LTKF) lie on the Cytoplasmic side of the membrane. A helical membrane pass occupies residues 352–373 (GKKTAVYIGTTSVVPFLISVVL). Residues 374 to 376 (VPS) are Extracellular-facing. The helical transmembrane segment at 377 to 413 (SLAVTYIASFAAGVSVAAAFLLPWSMLPDVVDDFKVQ) threads the bilayer. Over 414–423 (NPESQGHEAI) the chain is Cytoplasmic. The helical transmembrane segment at 424–450 (FYSFYVFFTKFASGVSLGVSTLSLDFA) threads the bilayer. The Extracellular segment spans residues 451–462 (GYVTRGCTQPGE). A helical transmembrane segment spans residues 463-486 (VKLTLKILVSAAPIVLIIIGLLIF). Over 487–523 (ISYPINEEKRQGNRKLLNEQRENEMDSETDSTELNVV) the chain is Cytoplasmic. Positions 504–523 (NEQRENEMDSETDSTELNVV) are disordered.

Belongs to the major facilitator superfamily. In terms of tissue distribution, expressed in the developing nervous system.

The protein localises to the cell membrane. Its subcellular location is the endoplasmic reticulum membrane. It catalyses the reaction a 1-acyl-sn-glycero-3-phosphocholine(in) + Na(+)(in) = a 1-acyl-sn-glycero-3-phosphocholine(out) + Na(+)(out). The catalysed reaction is 1-(4Z,7Z,10Z,13Z,16Z,19Z-docosahexaenoyl)-sn-glycero-3-phosphocholine(in) + Na(+)(in) = 1-(4Z,7Z,10Z,13Z,16Z,19Z-docosahexaenoyl)-sn-glycero-3-phosphocholine(out) + Na(+)(out). The enzyme catalyses 1-(9Z-octadecenoyl)-sn-glycero-3-phosphocholine(in) + Na(+)(in) = 1-(9Z-octadecenoyl)-sn-glycero-3-phosphocholine(out) + Na(+)(out). It carries out the reaction 1-hexadecanoyl-sn-glycero-3-phosphocholine(in) + Na(+)(in) = 1-hexadecanoyl-sn-glycero-3-phosphocholine(out) + Na(+)(out). It catalyses the reaction a 1-acyl-sn-glycero-3-phosphoethanolamine(in) + Na(+)(in) = a 1-acyl-sn-glycero-3-phosphoethanolamine(out) + Na(+)(out). Functionally, sodium-dependent lysophosphatidylcholine (LPC) symporter, which plays an essential role for blood-brain barrier formation and function. Specifically expressed in endothelium of the blood-brain barrier of micro-vessels and transports LPC into the brain. Transport of LPC is essential because it constitutes the major mechanism by which docosahexaenoic acid (DHA), an omega-3 fatty acid that is essential for normal brain growth and cognitive function, enters the brain. Transports LPC carrying long-chain fatty acids such LPC oleate and LPC palmitate with a minimum acyl chain length of 14 carbons. Does not transport docosahexaenoic acid in unesterified fatty acid. In Danio rerio (Zebrafish), this protein is Sodium-dependent lysophosphatidylcholine symporter 1-B (mfsd2ab).